We begin with the raw amino-acid sequence, 921 residues long: cGMP-dependent 3',5'-cyclic phosphodiesterase (921 aa).

M1 carries the N-acetylmethionine modification. 2 disordered regions span residues 1 to 21 and 177 to 198; these read MRRQ…PPGS and ESSV…DQKG. Residues 177-188 are compositionally biased toward polar residues; sequence ESSVAPEATQNP. 2 consecutive GAF domains span residues 220 to 357 and 389 to 528; these read DASS…STVL and DVSV…GISI. S411, D426, I445, Y468, and T479 together coordinate 3',5'-cyclic GMP. The PDEase domain occupies 558 to 882; that stretch reads SDDEYTKLLH…EHWTKVSHKF (325 aa). The Proton donor role is filled by H636. Positions 640, 676, 677, and 788 each coordinate Zn(2+). Position 677 (D677) interacts with Mg(2+).

Belongs to the cyclic nucleotide phosphodiesterase family. PDE2 subfamily. In terms of assembly, homodimer. Zn(2+) serves as cofactor. It depends on Mg(2+) as a cofactor.

It localises to the cell membrane. Its subcellular location is the cytoplasm. The protein resides in the mitochondrion. It is found in the mitochondrion inner membrane. The protein localises to the mitochondrion outer membrane. The enzyme catalyses a nucleoside 3',5'-cyclic phosphate + H2O = a nucleoside 5'-phosphate + H(+). It catalyses the reaction 3',5'-cyclic GMP + H2O = GMP + H(+). It carries out the reaction 3',5'-cyclic AMP + H2O = AMP + H(+). Its activity is regulated as follows. The 3',5'-cyclic-AMP phosphodiesterase activity is stimulated by 3',5'-cyclic GMP. In terms of biological role, cGMP-activated cyclic nucleotide phosphodiesterase with a dual-specificity for the second messengers cAMP and cGMP, which are key regulators of many important physiological processes. Has a higher efficiency with cGMP compared to cAMP. Plays a role in cell growth and migration. Regulates mitochondrial cAMP levels and respiration. Involved in the regulation of mitochondria morphology/dynamics and apoptotic cell death via local modulation of cAMP/PKA signaling in the mitochondrion, including the monitoring of local cAMP levels at the outer mitochondrial membrane and of PKA-dependent phosphorylation of DNM1L. The chain is cGMP-dependent 3',5'-cyclic phosphodiesterase from Bos taurus (Bovine).